The chain runs to 149 residues: Protegrin-1 (149 aa).

Residues 1–29 (METQRASLCLGRWSLWLLLLALVVPSASA) form the signal peptide. A propeptide spanning residues 30–130 (QALSYREAVL…DITCNEVQGV (101 aa)) is cleaved from the precursor. The segment at 61 to 80 (DQPPKADEDPGTPKPVSFTV) is disordered. 4 disulfides stabilise this stretch: Cys85–Cys96, Cys107–Cys124, Cys136–Cys145, and Cys138–Cys143. Arginine amide is present on Arg148.

The protein belongs to the cathelicidin family.

It is found in the secreted. Its function is as follows. Microbicidal activity. Active against E.coli, Listeria monocytogenes and C.albicans, in vitro. The protein is Protegrin-1 (NPG1) of Sus scrofa (Pig).